The chain runs to 219 residues: Kappa-scoloptoxin(11)-Ss1a (219 aa).

Residues 1–16 (MFYSHLLFFTFTFACS) form the signal peptide. Residues 17-25 (SSLNRKTKR) constitute a propeptide that is removed on maturation.

Post-translationally, contains 8 disulfide bonds. As to expression, expressed by the venom gland.

It localises to the secreted. Functionally, voltage-gated potassium channel inhibitor. This is Kappa-scoloptoxin(11)-Ss1a from Scolopendra dehaani (Thai centipede).